The sequence spans 454 residues: CCA-adding enzyme (454 aa).

ATP is bound by residues Ser-51 and Lys-54. CTP is bound by residues Ser-51 and Lys-54. Residues Asp-63, Asp-65, and Asp-118 each contribute to the Mg(2+) site. Residues His-141, Lys-161, and Tyr-170 each contribute to the ATP site. Residues His-141, Lys-161, and Tyr-170 each contribute to the CTP site.

The protein belongs to the tRNA nucleotidyltransferase/poly(A) polymerase family. Archaeal CCA-adding enzyme subfamily. In terms of assembly, homodimer. It depends on Mg(2+) as a cofactor.

It catalyses the reaction a tRNA precursor + 2 CTP + ATP = a tRNA with a 3' CCA end + 3 diphosphate. It carries out the reaction a tRNA with a 3' CCA end + 2 CTP + ATP = a tRNA with a 3' CCACCA end + 3 diphosphate. Its function is as follows. Catalyzes the addition and repair of the essential 3'-terminal CCA sequence in tRNAs without using a nucleic acid template. Adds these three nucleotides in the order of C, C, and A to the tRNA nucleotide-73, using CTP and ATP as substrates and producing inorganic pyrophosphate. tRNA 3'-terminal CCA addition is required both for tRNA processing and repair. Also involved in tRNA surveillance by mediating tandem CCA addition to generate a CCACCA at the 3' terminus of unstable tRNAs. While stable tRNAs receive only 3'-terminal CCA, unstable tRNAs are marked with CCACCA and rapidly degraded. The sequence is that of CCA-adding enzyme from Methanothermobacter thermautotrophicus (strain ATCC 29096 / DSM 1053 / JCM 10044 / NBRC 100330 / Delta H) (Methanobacterium thermoautotrophicum).